Reading from the N-terminus, the 257-residue chain is AA9 family lytic polysaccharide monooxygenase U (257 aa).

The first 19 residues, 1–19, serve as a signal peptide directing secretion; the sequence is MKLYLAAFLGAVATPGAFA. Histidine 20 is a binding site for Cu(2+). N-linked (GlcNAc...) asparagine glycosylation is found at asparagine 29 and asparagine 71. An intrachain disulfide couples cysteine 74 to cysteine 194. Position 113 (histidine 113) interacts with Cu(2+). The N-linked (GlcNAc...) asparagine glycan is linked to asparagine 161. Residue glutamine 189 coordinates O2. Position 191 (tyrosine 191) interacts with Cu(2+).

Belongs to the polysaccharide monooxygenase AA9 family. It depends on Cu(2+) as a cofactor.

It is found in the secreted. The enzyme catalyses [(1-&gt;4)-beta-D-glucosyl]n+m + reduced acceptor + O2 = 4-dehydro-beta-D-glucosyl-[(1-&gt;4)-beta-D-glucosyl]n-1 + [(1-&gt;4)-beta-D-glucosyl]m + acceptor + H2O.. Lytic polysaccharide monooxygenase (LPMO) that depolymerizes crystalline and amorphous polysaccharides via the oxidation of scissile alpha- or beta-(1-4)-glycosidic bonds, yielding C1 and C4 oxidation products. Catalysis by LPMOs requires the reduction of the active-site copper from Cu(II) to Cu(I) by a reducing agent and H(2)O(2) or O(2) as a cosubstrate. Shows no activity on wheat arabinoxylan, konjac glucomannan, acetylated spruce galactoglucomannan, or cellopentaose. The chain is AA9 family lytic polysaccharide monooxygenase U from Thermothielavioides terrestris (strain ATCC 38088 / NRRL 8126) (Thielavia terrestris).